The chain runs to 354 residues: Uroporphyrinogen decarboxylase (354 aa).

Residues 27–31 (RQAGR), Asp-77, Tyr-154, Ser-209, and His-327 contribute to the substrate site.

This sequence belongs to the uroporphyrinogen decarboxylase family. As to quaternary structure, homodimer.

It is found in the cytoplasm. It carries out the reaction uroporphyrinogen III + 4 H(+) = coproporphyrinogen III + 4 CO2. Its pathway is porphyrin-containing compound metabolism; protoporphyrin-IX biosynthesis; coproporphyrinogen-III from 5-aminolevulinate: step 4/4. In terms of biological role, catalyzes the decarboxylation of four acetate groups of uroporphyrinogen-III to yield coproporphyrinogen-III. The polypeptide is Uroporphyrinogen decarboxylase (Teredinibacter turnerae (strain ATCC 39867 / T7901)).